The primary structure comprises 313 residues: Phosphoenolpyruvate phosphomutase (313 aa).

The Nucleophile role is filled by D69.

Belongs to the isocitrate lyase/PEP mutase superfamily. PEP mutase family.

It catalyses the reaction phosphoenolpyruvate + H(+) = 3-phosphonopyruvate. Its pathway is secondary metabolite biosynthesis; bialaphos biosynthesis. Functionally, formation of a carbon-phosphorus bond by converting phosphoenolpyruvate (PEP) to phosphonopyruvate (P-Pyr). This is Phosphoenolpyruvate phosphomutase (bcpB) from Streptomyces hygroscopicus.